We begin with the raw amino-acid sequence, 493 residues long: Isoniazid-induced protein IniC (493 aa).

The protein is Isoniazid-induced protein IniC (iniC) of Mycobacterium tuberculosis (strain CDC 1551 / Oshkosh).